A 248-amino-acid polypeptide reads, in one-letter code: 1-(5-phosphoribosyl)-5-[(5-phosphoribosylamino)methylideneamino] imidazole-4-carboxamide isomerase (248 aa).

Catalysis depends on Asp8, which acts as the Proton acceptor. The active-site Proton donor is Asp129.

This sequence belongs to the HisA/HisF family.

It is found in the cytoplasm. The enzyme catalyses 1-(5-phospho-beta-D-ribosyl)-5-[(5-phospho-beta-D-ribosylamino)methylideneamino]imidazole-4-carboxamide = 5-[(5-phospho-1-deoxy-D-ribulos-1-ylimino)methylamino]-1-(5-phospho-beta-D-ribosyl)imidazole-4-carboxamide. It functions in the pathway amino-acid biosynthesis; L-histidine biosynthesis; L-histidine from 5-phospho-alpha-D-ribose 1-diphosphate: step 4/9. This Rhizobium etli (strain CIAT 652) protein is 1-(5-phosphoribosyl)-5-[(5-phosphoribosylamino)methylideneamino] imidazole-4-carboxamide isomerase.